The primary structure comprises 23 residues: Malate dehydrogenase (23 aa).

NAD(+) is bound at residue Asn7. Arg23 is a binding site for substrate.

Belongs to the LDH/MDH superfamily. MDH type 1 family. Homodimer.

It carries out the reaction (S)-malate + NAD(+) = oxaloacetate + NADH + H(+). The polypeptide is Malate dehydrogenase (Pseudotsuga menziesii (Douglas-fir)).